We begin with the raw amino-acid sequence, 902 residues long: Cytosolic 10-formyltetrahydrofolate dehydrogenase (902 aa).

The segment at 1–310 is hydrolase domain; it reads MKIAVIGQSL…PASQYFKTAD (310 aa). Residue 88 to 90 participates in (6R)-10-formyltetrahydrofolate binding; that stretch reads QFI. Histidine 106 (proton donor) is an active-site residue. Aspartate 142 serves as a coordination point for (6R)-10-formyltetrahydrofolate. The 78-residue stretch at 318–395 folds into the Carrier domain; sequence EEEQKVSEEI…EFIQMVVRRM (78 aa). At serine 354 the chain carries O-(pantetheine 4'-phosphoryl)serine. The tract at residues 417–902 is aldehyde dehydrogenase domain; that stretch reads TVKIPHQLFI…LKTKAVTIEY (486 aa). NADP(+)-binding positions include 571 to 573, 597 to 600, 630 to 635, 650 to 651, and 673 to 674; these read IPW, KPAQ, GSLIGQ, GS, and EL. The Proton acceptor role is filled by glutamate 673. The active-site Proton donor is the cysteine 707. NADP(+)-binding positions include lysine 757 and 804-806; that span reads ESF.

The protein in the N-terminal section; belongs to the GART family. This sequence in the C-terminal section; belongs to the aldehyde dehydrogenase family. ALDH1L subfamily. As to quaternary structure, homotetramer. Post-translationally, phosphopantetheinylation at Ser-354 by AASDHPPT is required for the formyltetrahydrofolate dehydrogenase activity.

It is found in the cytoplasm. The protein resides in the cytosol. It carries out the reaction (6R)-10-formyltetrahydrofolate + NADP(+) + H2O = (6S)-5,6,7,8-tetrahydrofolate + CO2 + NADPH + H(+). Functionally, cytosolic 10-formyltetrahydrofolate dehydrogenase that catalyzes the NADP(+)-dependent conversion of 10-formyltetrahydrofolate to tetrahydrofolate and carbon dioxide. May also have an NADP(+)-dependent aldehyde dehydrogenase activity towards formaldehyde, acetaldehyde, propionaldehyde, and benzaldehyde. The sequence is that of Cytosolic 10-formyltetrahydrofolate dehydrogenase (aldh1l1) from Xenopus laevis (African clawed frog).